A 410-amino-acid chain; its full sequence is Probable 2,3-bisphosphoglycerate-independent phosphoglycerate mutase (410 aa).

Belongs to the BPG-independent phosphoglycerate mutase family. A-PGAM subfamily.

It carries out the reaction (2R)-2-phosphoglycerate = (2R)-3-phosphoglycerate. Its pathway is carbohydrate degradation; glycolysis; pyruvate from D-glyceraldehyde 3-phosphate: step 3/5. Catalyzes the interconversion of 2-phosphoglycerate and 3-phosphoglycerate. In Deinococcus radiodurans (strain ATCC 13939 / DSM 20539 / JCM 16871 / CCUG 27074 / LMG 4051 / NBRC 15346 / NCIMB 9279 / VKM B-1422 / R1), this protein is Probable 2,3-bisphosphoglycerate-independent phosphoglycerate mutase.